Reading from the N-terminus, the 113-residue chain is Hydrogenase maturation factor HypA (113 aa).

Residue His-2 coordinates Ni(2+). The Zn(2+) site is built by Cys-73, Cys-76, Cys-89, and Cys-92.

Belongs to the HypA/HybF family.

Functionally, involved in the maturation of [NiFe] hydrogenases. Required for nickel insertion into the metal center of the hydrogenase. The protein is Hydrogenase maturation factor HypA of Legionella pneumophila (strain Paris).